The chain runs to 304 residues: PHO85 cyclin-9 (304 aa).

The 128-residue stretch at 19 to 146 folds into the Cyclin N-terminal domain; it reads EMIQFLATST…LLEYLNWDVR (128 aa).

This sequence belongs to the cyclin family. PCL1,2 subfamily. In terms of assembly, forms a cyclin-CDK complex with PHO85.

Functionally, m/G1-specific cyclin partner of the cyclin-dependent kinase (CDK) PHO85. May have a role in bud site selection in G1 phase. This chain is PHO85 cyclin-9 (PCL9), found in Saccharomyces cerevisiae (strain ATCC 204508 / S288c) (Baker's yeast).